Consider the following 130-residue polypeptide: Small ribosomal subunit protein uS11 (130 aa).

It belongs to the universal ribosomal protein uS11 family. As to quaternary structure, part of the 30S ribosomal subunit. Interacts with proteins S7 and S18. Binds to IF-3.

Located on the platform of the 30S subunit, it bridges several disparate RNA helices of the 16S rRNA. Forms part of the Shine-Dalgarno cleft in the 70S ribosome. The protein is Small ribosomal subunit protein uS11 of Thermosynechococcus vestitus (strain NIES-2133 / IAM M-273 / BP-1).